We begin with the raw amino-acid sequence, 396 residues long: NAD(P)H oxidoreductase RTN4IP1, mitochondrial (396 aa).

A mitochondrion-targeting transit peptide spans 1-40 (MGFLKTCVFRRNACTAVCFWRSQVVQKPSVRKISTTSPRS). The region spanning 52 to 393 (GSNEVLRFTQ…RGHARGKTVI (342 aa)) is the Enoyl reductase (ER) domain. Ser214, Gly216, Val217, Ser237, Tyr255, Asn276, Leu300, Ala341, Phe343, His386, Ala387, and Arg388 together coordinate NADPH.

Belongs to the zinc-containing alcohol dehydrogenase family. Quinone oxidoreductase subfamily. As to quaternary structure, interacts with RTN4, UQCRC1 and UQCRC2.

It localises to the mitochondrion matrix. The protein localises to the mitochondrion outer membrane. The enzyme catalyses a 3-demethylubiquinone + NADH + 2 H(+) = a 3-demethylubiquinol + NAD(+). It carries out the reaction a 3-demethylubiquinone + NADPH + 2 H(+) = a 3-demethylubiquinol + NADP(+). The catalysed reaction is 3-demethylubiquinone-10 + NADH + 2 H(+) = 3-demethylubiquinol-10 + NAD(+). It catalyses the reaction 3-demethylubiquinone-10 + NADPH + 2 H(+) = 3-demethylubiquinol-10 + NADP(+). Its pathway is cofactor biosynthesis; ubiquinone biosynthesis. NAD(P)H oxidoreductase involved in the ubiquinone biosynthetic pathway. Required for the O-methyltransferase activity of COQ3. Able to catalyze the oxidoreduction of 3-demethylubiquinone into 3-demethylubiquinol in vitro. However, it is unclear if 3-demethylubiquinone constitutes a substrate in vivo. May also play a role in the regulation of retinal ganglion cell (RGC) neurite outgrowth, and hence in the development of the inner retina and optic nerve. Appears to be a potent inhibitor of regeneration following spinal cord injury. The polypeptide is NAD(P)H oxidoreductase RTN4IP1, mitochondrial (RTN4IP1) (Bos taurus (Bovine)).